A 173-amino-acid chain; its full sequence is RNA pyrophosphohydrolase (173 aa).

One can recognise a Nudix hydrolase domain in the interval Gly-6–Gln-149. The Nudix box motif lies at Gly-38–Gly-59.

Belongs to the Nudix hydrolase family. RppH subfamily. It depends on a divalent metal cation as a cofactor.

Accelerates the degradation of transcripts by removing pyrophosphate from the 5'-end of triphosphorylated RNA, leading to a more labile monophosphorylated state that can stimulate subsequent ribonuclease cleavage. This Psychrobacter cryohalolentis (strain ATCC BAA-1226 / DSM 17306 / VKM B-2378 / K5) protein is RNA pyrophosphohydrolase.